Here is a 297-residue protein sequence, read N- to C-terminus: MDERALVFSDGLTDPQISQVLALAEAATRHDGVAPLSEQALLTLRAGRSRSLLSLEDGVIAGYAHLDPAPDGAGASGEVVVHPGRRRRGHGRALLRALRERARGPLRVWAHGDLAPAAALAAAEGMARVRVLLQMRRPLQDSPLPEVTVPDGVTIRTFEPGRDETAWLRVNGRAFADHPEQGAWTLEDLRARQAEPWFDPAGLFLAERDGRLIGFHWTKVHPDPIGEVYVVGVDPSAQGLGLGRVLTLIGLHHLRDRGLPAVMLYVDESNRPALRLYESLGFTRYAVDVMYQSPPPH.

2 consecutive N-acetyltransferase domains span residues 7 to 156 (VFSD…VTIR) and 153 to 297 (VTIR…PPPH). 1D-myo-inositol 2-(L-cysteinylamino)-2-deoxy-alpha-D-glucopyranoside is bound at residue glutamate 38. Residue 79–81 (VVV) coordinates acetyl-CoA. Glutamate 180, lysine 219, and glutamate 227 together coordinate 1D-myo-inositol 2-(L-cysteinylamino)-2-deoxy-alpha-D-glucopyranoside. Acetyl-CoA is bound by residues 231-233 (VGV) and 238-244 (QGLGLGR). Tyrosine 265 contributes to the 1D-myo-inositol 2-(L-cysteinylamino)-2-deoxy-alpha-D-glucopyranoside binding site. An acetyl-CoA-binding site is contributed by 270 to 275 (NRPALR).

It belongs to the acetyltransferase family. MshD subfamily. As to quaternary structure, monomer.

It catalyses the reaction 1D-myo-inositol 2-(L-cysteinylamino)-2-deoxy-alpha-D-glucopyranoside + acetyl-CoA = mycothiol + CoA + H(+). In terms of biological role, catalyzes the transfer of acetyl from acetyl-CoA to desacetylmycothiol (Cys-GlcN-Ins) to form mycothiol. The protein is Mycothiol acetyltransferase of Thermomonospora curvata (strain ATCC 19995 / DSM 43183 / JCM 3096 / KCTC 9072 / NBRC 15933 / NCIMB 10081 / Henssen B9).